A 378-amino-acid chain; its full sequence is Protein-glutamate methylesterase/protein-glutamine glutaminase 2 (378 aa).

Residues 4–121 (KVLVVDDSGF…SRNPEKVKQL (118 aa)) form the Response regulatory domain. Asp-55 carries the 4-aspartylphosphate modification. The disordered stretch occupies residues 141 to 188 (APAPAAAPTPAPIPAAAPSSFGSHSAPARPAPAPAPTRAPAASASSPA). A compositionally biased stretch (pro residues) spans 145–155 (AAAPTPAPIPA). Low complexity-rich tracts occupy residues 156-168 (AAPS…SAPA) and 178-188 (RAPAASASSPA). Residues 187-378 (PAPKRKNYKL…IGKHIVEACV (192 aa)) enclose the CheB-type methylesterase domain. Active-site residues include Ser-202, His-229, and Asp-322.

This sequence belongs to the CheB family. Post-translationally, phosphorylated by CheA. Phosphorylation of the N-terminal regulatory domain activates the methylesterase activity.

Its subcellular location is the cytoplasm. It catalyses the reaction [protein]-L-glutamate 5-O-methyl ester + H2O = L-glutamyl-[protein] + methanol + H(+). It carries out the reaction L-glutaminyl-[protein] + H2O = L-glutamyl-[protein] + NH4(+). Functionally, involved in chemotaxis. Part of a chemotaxis signal transduction system that modulates chemotaxis in response to various stimuli. Catalyzes the demethylation of specific methylglutamate residues introduced into the chemoreceptors (methyl-accepting chemotaxis proteins or MCP) by CheR. Also mediates the irreversible deamidation of specific glutamine residues to glutamic acid. The chain is Protein-glutamate methylesterase/protein-glutamine glutaminase 2 from Pseudomonas fluorescens (strain Pf0-1).